Here is a 645-residue protein sequence, read N- to C-terminus: ATP-dependent zinc metalloprotease FtsH 1 (645 aa).

The Cytoplasmic portion of the chain corresponds to 1–6 (MRSTQK). Residues 7 to 27 (TLALWFFLIIMAVFLFQAYES) traverse the membrane as a helical segment. Over 28-110 (KQQKAIADFN…NYERADNGGF (83 aa)) the chain is Periplasmic. The chain crosses the membrane as a helical span at residues 111–131 (FQSLLVNWLPLILIVAMFLFI). Topologically, residues 132–645 (MRQIQAGGGK…PVGNTGPVTI (514 aa)) are cytoplasmic. 203-210 (GSPGTGKT) is an ATP binding site. A Zn(2+)-binding site is contributed by histidine 425. Glutamate 426 is an active-site residue. Zn(2+)-binding residues include histidine 429 and aspartate 501.

The protein in the central section; belongs to the AAA ATPase family. It in the C-terminal section; belongs to the peptidase M41 family. In terms of assembly, homohexamer. The cofactor is Zn(2+).

The protein resides in the cell inner membrane. Acts as a processive, ATP-dependent zinc metallopeptidase for both cytoplasmic and membrane proteins. Plays a role in the quality control of integral membrane proteins. The chain is ATP-dependent zinc metalloprotease FtsH 1 from Bdellovibrio bacteriovorus (strain ATCC 15356 / DSM 50701 / NCIMB 9529 / HD100).